The sequence spans 590 residues: Myo-inositol transporter 3C (590 aa).

The Cytoplasmic portion of the chain corresponds to 1–63 (MSRTPSSLDK…GEDKVTPYLC (63 aa)). The helical transmembrane segment at 64–86 (FLISASAIAGFLFGYDTGVVGVA) threads the bilayer. Residues 87-105 (LPLVGTDLGGSVLSSSQQE) are Extracellular-facing. A helical membrane pass occupies residues 106 to 126 (IITAGTTIGAIFGSAILGGWG). Over 127 to 132 (DRLGRK) the chain is Cytoplasmic. Residues 133–153 (VAILIADVFFTVGAVLIAASY) traverse the membrane as a helical segment. Residues 154–162 (SVPQMIVGR) are Extracellular-facing. A helical membrane pass occupies residues 163–183 (IVLGVGVGGAAAIAPLFITET). Residues 184-192 (APTAVRGRC) lie on the Cytoplasmic side of the membrane. The chain crosses the membrane as a helical span at residues 193 to 213 (IGVNAFFIPFGQVISEAIGAG). Residues 214 to 222 (VQDMKNGWR) are Extracellular-facing. Residues 223–243 (LLFALGAVPSLFQLILFHYLP) traverse the membrane as a helical segment. Residues 244-325 (ESPRILILRG…TVSLIQMAGQ (82 aa)) lie on the Cytoplasmic side of the membrane. A helical transmembrane segment spans residues 326–346 (LSGFNTLLYYAGTLFSLLGLT). At 347–349 (NPA) the chain is on the extracellular side. A helical transmembrane segment spans residues 350-370 (LGGLIPAGTNAFFVLVGMTLV). The Cytoplasmic portion of the chain corresponds to 371-376 (DKVGRR). Residues 377 to 397 (GLLMFGVPIMLAGLVWNIVAF) form a helical membrane-spanning segment. The Extracellular portion of the chain corresponds to 398–417 (HYLCIPTGGLLDTSYKYDTK). Residues 418–438 (LVGIVIGGIVFFTTGFGLTYS) form a helical membrane-spanning segment. Topologically, residues 439 to 454 (HLAWYQSEFLALEVRS) are cytoplasmic. A helical membrane pass occupies residues 455 to 475 (VGSGIATTANWVANLVVSVSY). Over 476-485 (LTELETLTPS) the chain is Extracellular. The chain crosses the membrane as a helical span at residues 486–506 (GTYGLYLGFSVVFFIFAVFCY). The Cytoplasmic portion of the chain corresponds to 507–590 (PETKQLSIDE…NGAKRFPISR (84 aa)).

The protein belongs to the major facilitator superfamily. Sugar transporter (TC 2.A.1.1) family.

The protein resides in the cell membrane. It carries out the reaction myo-inositol(out) + H(+)(out) = myo-inositol(in) + H(+)(in). Functionally, major transporter for myo-inositol. Plays a role in the traversal of the host blood-brain barrier. The protein is Myo-inositol transporter 3C of Cryptococcus neoformans var. grubii serotype A (strain H99 / ATCC 208821 / CBS 10515 / FGSC 9487) (Filobasidiella neoformans var. grubii).